A 168-amino-acid polypeptide reads, in one-letter code: ATP synthase subunit b (168 aa).

A helical transmembrane segment spans residues tryptophan 13 to leucine 33.

The protein belongs to the ATPase B chain family. As to quaternary structure, F-type ATPases have 2 components, F(1) - the catalytic core - and F(0) - the membrane proton channel. F(1) has five subunits: alpha(3), beta(3), gamma(1), delta(1), epsilon(1). F(0) has three main subunits: a(1), b(2) and c(10-14). The alpha and beta chains form an alternating ring which encloses part of the gamma chain. F(1) is attached to F(0) by a central stalk formed by the gamma and epsilon chains, while a peripheral stalk is formed by the delta and b chains.

The protein resides in the cell membrane. F(1)F(0) ATP synthase produces ATP from ADP in the presence of a proton or sodium gradient. F-type ATPases consist of two structural domains, F(1) containing the extramembraneous catalytic core and F(0) containing the membrane proton channel, linked together by a central stalk and a peripheral stalk. During catalysis, ATP synthesis in the catalytic domain of F(1) is coupled via a rotary mechanism of the central stalk subunits to proton translocation. Functionally, component of the F(0) channel, it forms part of the peripheral stalk, linking F(1) to F(0). This chain is ATP synthase subunit b, found in Moorella thermoacetica (strain ATCC 39073 / JCM 9320).